The sequence spans 425 residues: Serine--tRNA ligase (425 aa).

231–233 (TAE) is a binding site for L-serine. 262–264 (RSE) provides a ligand contact to ATP. Residue glutamate 285 participates in L-serine binding. 349–352 (EISS) is an ATP binding site. Position 385 (serine 385) interacts with L-serine.

The protein belongs to the class-II aminoacyl-tRNA synthetase family. Type-1 seryl-tRNA synthetase subfamily. Homodimer. The tRNA molecule binds across the dimer.

It is found in the cytoplasm. The catalysed reaction is tRNA(Ser) + L-serine + ATP = L-seryl-tRNA(Ser) + AMP + diphosphate + H(+). The enzyme catalyses tRNA(Sec) + L-serine + ATP = L-seryl-tRNA(Sec) + AMP + diphosphate + H(+). It functions in the pathway aminoacyl-tRNA biosynthesis; selenocysteinyl-tRNA(Sec) biosynthesis; L-seryl-tRNA(Sec) from L-serine and tRNA(Sec): step 1/1. Functionally, catalyzes the attachment of serine to tRNA(Ser). Is also able to aminoacylate tRNA(Sec) with serine, to form the misacylated tRNA L-seryl-tRNA(Sec), which will be further converted into selenocysteinyl-tRNA(Sec). This is Serine--tRNA ligase from Exiguobacterium sibiricum (strain DSM 17290 / CCUG 55495 / CIP 109462 / JCM 13490 / 255-15).